The sequence spans 1533 residues: Actin cytoskeleton-regulatory complex protein pan-1 (1533 aa).

The tract at residues 1 to 204 (MYSNSNAFLG…PPPPVKPQAT (204 aa)) is disordered. Composition is skewed to low complexity over residues 19–46 (QQPQQQQQQYGAPSPFGQQGPMQPQPTG), 53–136 (GFAP…FQTG), 143–170 (IPQQFQQQQSFQQQQQQQQQPSIQQPQP), and 177–193 (QIQAPAQQPAPTAQGGI). The EH 1 domain maps to 244 to 333 (DQARFETLFK…DHIKNEVSSM (90 aa)). An EF-hand 1 domain is found at 277 to 312 (LDGDSLSQIWTLADTTRSGQLHFPEFALAMYLCNLK). Over residues 345 to 359 (AGSSSAPASNAPSFA) the composition is skewed to low complexity. Disordered stretches follow at residues 345 to 378 (AGSSSAPASNAPSFATQQNTAAVPTIQQPQPQPS) and 393 to 423 (QQTGFMGQNQGLQPQQTGFPGMNPQPTGYAG). Polar residues-rich tracts occupy residues 360-378 (TQQNTAAVPTIQQPQPQPS) and 393-410 (QQTGFMGQNQGLQPQQTG). An EH 2 domain is found at 513–602 (EKTRYDALFR…PELVPPSARN (90 aa)). The 36-residue stretch at 546–581 (LDKPDLERIWTLADNGNKGRLDLDEFAVAMHLIYRK) folds into the EF-hand 2 domain. Residues 649–664 (NRKDATVFKNNDEEVG) show a composition bias toward basic and acidic residues. Disordered regions lie at residues 649 to 691 (NRKD…GDDL), 894 to 917 (IEDSLKEGAPDSTSEHEKRRWEDA), 935 to 1306 (SRAA…STNP), and 1334 to 1533 (DAIS…RVLD). Residues 690-890 (DLTIEQLRKK…RDVEDSVREF (201 aa)) are a coiled coil. Basic and acidic residues-rich tracts occupy residues 894-916 (IEDSLKEGAPDSTSEHEKRRWED) and 935-947 (SRAARIRSQDRQG). Over residues 968–982 (TPSPSISRTSTPAST) the composition is skewed to low complexity. A coiled-coil region spans residues 1026–1209 (ETAAQRAERE…KQLEAIDDED (184 aa)). Basic and acidic residues-rich tracts occupy residues 1031–1063 (RAERERAERAEKRRQAEEEDARREAERQAKLAE), 1090–1164 (GKAD…EEEK), and 1173–1203 (EAKEKEAQLAARRAEIEAARKREEELRKQLE). Residues 1204-1218 (AIDDEDSSSSDEEGP) show a composition bias toward acidic residues. Polar residues predominate over residues 1221–1237 (ITPQASTPTVGGSQVGT). Residues 1279–1293 (SQSSEASTSSVAAPV) are compositionally biased toward low complexity. Residues 1348-1367 (DDDDDDWGSEKGSDDEDSDD) are compositionally biased toward acidic residues. Positions 1412 to 1495 (SSPPPPPAPV…PPPGGAPAPS (84 aa)) are enriched in pro residues. The region spanning 1500 to 1517 (RPAGLLGEIQAGRALKKT) is the WH2 domain.

Belongs to the PAN1 family. In terms of assembly, component of the PAN1 actin cytoskeleton-regulatory complex.

The protein localises to the cell membrane. It is found in the endosome membrane. It localises to the cytoplasm. The protein resides in the cytoskeleton. Its subcellular location is the actin patch. Functionally, component of the PAN1 actin cytoskeleton-regulatory complex required for the internalization of endosomes during actin-coupled endocytosis. The complex links the site of endocytosis to the cell membrane-associated actin cytoskeleton. Mediates uptake of external molecules and vacuolar degradation of plasma membrane proteins. Plays a role in the proper organization of the cell membrane-associated actin cytoskeleton and promotes its destabilization. The sequence is that of Actin cytoskeleton-regulatory complex protein pan-1 (pan-1) from Neurospora crassa (strain ATCC 24698 / 74-OR23-1A / CBS 708.71 / DSM 1257 / FGSC 987).